Reading from the N-terminus, the 127-residue chain is Major sperm protein 77/79 (127 aa).

At Ala-2 the chain carries N-acetylalanine. The 118-residue stretch at Asp-9–Asn-126 folds into the MSP domain.

In terms of tissue distribution, sperm.

It is found in the cell projection. The protein localises to the pseudopodium. Its subcellular location is the cytoplasm. The protein resides in the cytoskeleton. In terms of biological role, central component in molecular interactions underlying sperm crawling. Forms an extensive filament system that extends from sperm villipoda, along the leading edge of the pseudopod. This chain is Major sperm protein 77/79 (msp-77), found in Caenorhabditis elegans.